We begin with the raw amino-acid sequence, 394 residues long: Protein maelstrom (394 aa).

A DNA-binding region (HMG box) is located at residues 2 to 69; that stretch reads APKKQNGFMM…ARRDKRGSLN (68 aa). Residues 44 to 93 are disordered; the sequence is TQQRGPYNSDAKDANAARRDKRGSLNGHGQVDKAQREAAESLMDKAQREA. Basic and acidic residues predominate over residues 73–93; it reads QVDKAQREAAESLMDKAQREA.

It belongs to the maelstrom family.

The protein resides in the cytoplasm. Its subcellular location is the nucleus. Functionally, involved both in the piRNA and miRNA metabolic processes. As a component of the meiotic nuage, plays a central role during oogenesis by repressing transposable elements and preventing their mobilization, which is essential for the germline integrity. Repression of transposable elements is mediated via the piRNA metabolic process, which mediates the repression of transposable elements during meiosis by forming complexes composed of piRNAs and Piwi proteins and governs the repression of transposons. As a nuclear component, it is required for proper differentiation in the germline stem cell (GSC) lineage by repressing microRNA-7 (miR-7), thereby acting as an indirect regulator of bag-of-marbles (Bam). Acts by binding to the promoter of miR-7 gene and repressing its expression; miR-7 repression alleviates the Bam repression by miR-7, thereby allowing differentiation in the germline stem cell (GSC) lineage. The protein is Protein maelstrom (mael) of Drosophila simulans (Fruit fly).